The sequence spans 341 residues: Eukaryotic translation initiation factor 2 subunit 1 (341 aa).

Residues 16 to 87 (EDVVMVNVLS…EKGYIDLSKR (72 aa)) form the S1 motif domain. Ser-51 is subject to Phosphoserine. The segment at 293–341 (AENAQVAGDDDEEDGADQEGMQFDPEKEFNHKGSGAGRANEEDEEEEED) is disordered. The span at 300-309 (GDDDEEDGAD) shows a compositional bias: acidic residues.

This sequence belongs to the eIF-2-alpha family. As to quaternary structure, eukaryotic translation initiation factor 2 eIF2 is a heterotrimeric complex composed of an alpha, a beta and a gamma subunit. In terms of processing, phosphorylation of eIF-2-alpha impairs the recycling of eIF-2 between successive rounds of initiation and thus leads to inhibition of translation.

It is found in the cytoplasm. The protein localises to the cytosol. Functionally, eIF-2 functions in the early steps of protein synthesis by forming a ternary complex with GTP and initiator tRNA. This pre-initiation complex mediates ribosomal recognition of a start codon during the scanning process of the leader region. This is Eukaryotic translation initiation factor 2 subunit 1 from Drosophila melanogaster (Fruit fly).